A 125-amino-acid polypeptide reads, in one-letter code: Small ribosomal subunit protein eS8 (125 aa).

The protein belongs to the eukaryotic ribosomal protein eS8 family. In terms of assembly, part of the 30S ribosomal subunit.

This chain is Small ribosomal subunit protein eS8, found in Methanocella arvoryzae (strain DSM 22066 / NBRC 105507 / MRE50).